Consider the following 322-residue polypeptide: uncharacterized protein (322 aa).

The first 27 residues, 1 to 27 (MKRLFWNLKHKKAWLVLLLGTGMILSS), serve as a signal peptide directing secretion. Residue C28 is the site of N-palmitoyl cysteine attachment. The S-diacylglycerol cysteine moiety is linked to residue C28. Residues 235–254 (DNSTNPNAPGSGQGDSTPPA) are compositionally biased toward polar residues. A disordered region spans residues 235–298 (DNSTNPNAPG…AVQRSQKSYG (64 aa)). Residues 257 to 267 (GEGGGSDGSSG) are compositionally biased toward gly residues. Over residues 274–296 (NGQNTTPTSPQSSQPAVQRSQKS) the composition is skewed to polar residues.

The protein resides in the cell membrane. This is an uncharacterized protein from Mycoplasma genitalium (strain ATCC 33530 / DSM 19775 / NCTC 10195 / G37) (Mycoplasmoides genitalium).